The sequence spans 82 residues: Sec-independent protein translocase protein TatA (82 aa).

The chain crosses the membrane as a helical span at residues 1–21 (MGSFSIWHWLIVLLIVVMVFG). Residues 46-82 (GASTDDSATTSAPAGQVTNNSTAADKTTIDVEAKHKS) are disordered. The segment covering 49–70 (TDDSATTSAPAGQVTNNSTAAD) has biased composition (polar residues). A compositionally biased stretch (basic and acidic residues) spans 72–82 (TTIDVEAKHKS).

Belongs to the TatA/E family. The Tat system comprises two distinct complexes: a TatABC complex, containing multiple copies of TatA, TatB and TatC subunits, and a separate TatA complex, containing only TatA subunits. Substrates initially bind to the TatABC complex, which probably triggers association of the separate TatA complex to form the active translocon.

It localises to the cell inner membrane. Part of the twin-arginine translocation (Tat) system that transports large folded proteins containing a characteristic twin-arginine motif in their signal peptide across membranes. TatA could form the protein-conducting channel of the Tat system. This chain is Sec-independent protein translocase protein TatA, found in Acidovorax sp. (strain JS42).